A 267-amino-acid polypeptide reads, in one-letter code: MTRIAIVGASGRMGKVLVEAVCDNPDASLGAASVRVGSSLVGADAGEIAGLGKKGVACVDDLAQVMDDFDVIIDFTSPETTLELLALCRKEGKAIVIGTTGFSDQQKTLLAEAAQDCPVVFAPNMSVGVNLLLNILALTAKTLGDDYDVEVIEAHHRFKKDAPSGTALRLGEVVAEAMGRNLNECAVYGREGITGERDKKTIGFETIRAGDIVGEHTVMFATMGERIEITHKASSRMTFAKGAVKAALWLHGVAPGLYDMQDVLGLK.

Residue 8 to 13 (GASGRM) participates in NAD(+) binding. NADP(+) is bound at residue Arg35. Residues 98-100 (GTT) and 122-125 (APNM) contribute to the NAD(+) site. Residue His155 is the Proton donor/acceptor of the active site. His156 lines the (S)-2,3,4,5-tetrahydrodipicolinate pocket. Catalysis depends on Lys159, which acts as the Proton donor. Residue 165-166 (GT) coordinates (S)-2,3,4,5-tetrahydrodipicolinate.

Belongs to the DapB family.

It localises to the cytoplasm. The enzyme catalyses (S)-2,3,4,5-tetrahydrodipicolinate + NAD(+) + H2O = (2S,4S)-4-hydroxy-2,3,4,5-tetrahydrodipicolinate + NADH + H(+). It carries out the reaction (S)-2,3,4,5-tetrahydrodipicolinate + NADP(+) + H2O = (2S,4S)-4-hydroxy-2,3,4,5-tetrahydrodipicolinate + NADPH + H(+). The protein operates within amino-acid biosynthesis; L-lysine biosynthesis via DAP pathway; (S)-tetrahydrodipicolinate from L-aspartate: step 4/4. Catalyzes the conversion of 4-hydroxy-tetrahydrodipicolinate (HTPA) to tetrahydrodipicolinate. The protein is 4-hydroxy-tetrahydrodipicolinate reductase of Hahella chejuensis (strain KCTC 2396).